The sequence spans 201 residues: Orotate phosphoribosyltransferase (201 aa).

Residue 113–121 (EDIITTGKS) coordinates 5-phospho-alpha-D-ribose 1-diphosphate. Orotate contacts are provided by Thr-117 and Arg-145.

It belongs to the purine/pyrimidine phosphoribosyltransferase family. PyrE subfamily. Homodimer. Requires Mg(2+) as cofactor.

It carries out the reaction orotidine 5'-phosphate + diphosphate = orotate + 5-phospho-alpha-D-ribose 1-diphosphate. It functions in the pathway pyrimidine metabolism; UMP biosynthesis via de novo pathway; UMP from orotate: step 1/2. Functionally, catalyzes the transfer of a ribosyl phosphate group from 5-phosphoribose 1-diphosphate to orotate, leading to the formation of orotidine monophosphate (OMP). The chain is Orotate phosphoribosyltransferase from Helicobacter pylori (strain Shi470).